A 468-amino-acid chain; its full sequence is Tapasin-related protein (468 aa).

A signal peptide spans 1-18; that stretch reads MGTQEGWCLLLCLALSGA. Topologically, residues 19–405 are lumenal; it reads AETKPHPAER…STQVVPPERR (387 aa). Positions 181–297 constitute an Ig-like V-type domain; it reads PQGTVRTAVE…SLYRAQQIIQ (117 aa). 2 disulfide bridges follow: Cys212-Cys283 and Cys321-Cys382. The N-linked (GlcNAc...) asparagine glycan is linked to Asn265. The Ig-like C1-type domain maps to 304 to 394; that stretch reads PKVRLSLANE…MHISLEEPLG (91 aa). Residues 406–426 traverse the membrane as a helical segment; the sequence is TALGVIFASSLFLLALLFLGL. Residues 427 to 468 are Cytoplasmic-facing; the sequence is QRRQAPTRVGLLQAERWKTTSCADTQSSHLHEDRTACVSQPS.

As to quaternary structure, interacts with peptide-free HLA-A*02-B2M complexes or those loaded with low affinity peptides, likely facilitating peptide exchange onto higher affinity peptides. Interacts with MR1 in a ligand-independent way; this interaction may stabilize MR1 pool and facilitate ligand loading and dissociation.

It is found in the cell membrane. It localises to the endoplasmic reticulum membrane. The protein resides in the microsome membrane. Its subcellular location is the golgi apparatus membrane. In terms of biological role, component of the antigen processing and presentation pathway, which binds to MHC class I coupled with beta2-microglobulin/B2M. Association between TAPBPR and MHC class I occurs in the absence of a functional peptide-loading complex (PLC). Expression seems to slow down and down-regulate MHC class I surface expression. This is Tapasin-related protein (TAPBPL) from Pongo abelii (Sumatran orangutan).